Here is a 380-residue protein sequence, read N- to C-terminus: Cytochrome b (380 aa).

4 consecutive transmembrane segments (helical) span residues 34–54, 78–99, 114–134, and 179–199; these read FGSL…LLAT, WLIR…YLHI, WNTG…GYVL, and FFAL…IHLT. 2 residues coordinate heme b: histidine 84 and histidine 98. Heme b-binding residues include histidine 183 and histidine 197. Histidine 202 provides a ligand contact to a ubiquinone. 4 consecutive transmembrane segments (helical) span residues 227–247, 289–309, 321–341, and 348–368; these read LKDI…ALFS, LGGV…PLLH, LSQL…WVGS, and FIII…ILFP.

Belongs to the cytochrome b family. The cytochrome bc1 complex contains 11 subunits: 3 respiratory subunits (MT-CYB, CYC1 and UQCRFS1), 2 core proteins (UQCRC1 and UQCRC2) and 6 low-molecular weight proteins (UQCRH/QCR6, UQCRB/QCR7, UQCRQ/QCR8, UQCR10/QCR9, UQCR11/QCR10 and a cleavage product of UQCRFS1). This cytochrome bc1 complex then forms a dimer. Heme b is required as a cofactor.

It localises to the mitochondrion inner membrane. Its function is as follows. Component of the ubiquinol-cytochrome c reductase complex (complex III or cytochrome b-c1 complex) that is part of the mitochondrial respiratory chain. The b-c1 complex mediates electron transfer from ubiquinol to cytochrome c. Contributes to the generation of a proton gradient across the mitochondrial membrane that is then used for ATP synthesis. In Ciconia ciconia (White stork), this protein is Cytochrome b (MT-CYB).